Consider the following 31-residue polypeptide: Aspartate aminotransferase, cytoplasmic (31 aa).

This sequence belongs to the class-I pyridoxal-phosphate-dependent aminotransferase family. As to quaternary structure, homodimer. The cofactor is pyridoxal 5'-phosphate.

The protein resides in the cytoplasm. It carries out the reaction L-aspartate + 2-oxoglutarate = oxaloacetate + L-glutamate. The catalysed reaction is L-cysteine + 2-oxoglutarate = 2-oxo-3-sulfanylpropanoate + L-glutamate. The enzyme catalyses (2S)-2-aminobutanoate + 2-oxoglutarate = 2-oxobutanoate + L-glutamate. It catalyses the reaction 3-sulfino-L-alanine + 2-oxoglutarate = 3-sulfinopyruvate + L-glutamate. Its function is as follows. Biosynthesis of L-glutamate from L-aspartate or L-cysteine. Important regulator of levels of glutamate, the major excitatory neurotransmitter of the vertebrate central nervous system. Acts as a scavenger of glutamate in brain neuroprotection. The aspartate aminotransferase activity is involved in hepatic glucose synthesis during development and in adipocyte glyceroneogenesis. Using L-cysteine as substrate, regulates levels of mercaptopyruvate, an important source of hydrogen sulfide. Mercaptopyruvate is converted into H(2)S via the action of 3-mercaptopyruvate sulfurtransferase (3MST). Hydrogen sulfide is an important synaptic modulator and neuroprotectant in the brain. This chain is Aspartate aminotransferase, cytoplasmic, found in Oryctolagus cuniculus (Rabbit).